Consider the following 426-residue polypeptide: Glutamate-1-semialdehyde 2,1-aminomutase (426 aa).

Residue lysine 265 is modified to N6-(pyridoxal phosphate)lysine.

This sequence belongs to the class-III pyridoxal-phosphate-dependent aminotransferase family. HemL subfamily. Homodimer. The cofactor is pyridoxal 5'-phosphate.

The protein resides in the cytoplasm. It carries out the reaction (S)-4-amino-5-oxopentanoate = 5-aminolevulinate. It participates in porphyrin-containing compound metabolism; protoporphyrin-IX biosynthesis; 5-aminolevulinate from L-glutamyl-tRNA(Glu): step 2/2. This is Glutamate-1-semialdehyde 2,1-aminomutase from Erwinia tasmaniensis (strain DSM 17950 / CFBP 7177 / CIP 109463 / NCPPB 4357 / Et1/99).